Here is a 333-residue protein sequence, read N- to C-terminus: Starch-binding domain-containing protein 1 (333 aa).

Residues 1–6 are Extracellular-facing; that stretch reads MGAVWS. A helical transmembrane segment spans residues 7–23; the sequence is ALLVGGGLAGALILWLL. The Cytoplasmic portion of the chain corresponds to 24-333; it reads RGDSGAPGKD…KVVHGWWGIH (310 aa). 2 disordered regions span residues 31-73 and 106-139; these read GKDG…ELVS and NARE…RVGE. Over residues 50–61 the composition is skewed to gly residues; the sequence is PGGGPGGGGSGG. Ser-67 is modified (phosphoserine). Residues 124 to 134 show a composition bias toward polar residues; it reads NSETSRNQSPE. Ser-135 and Ser-162 each carry phosphoserine. Residues 181-187 carry the LIR motif; that stretch reads HEDWEVV. Ser-191, Ser-192, Ser-201, Ser-205, Ser-208, Ser-216, and Ser-219 each carry phosphoserine. In terms of domain architecture, CBM20 spans 233 to 332; the sequence is SVKPRQVSIQ…DKVVHGWWGI (100 aa).

As to quaternary structure, interacts with the ATG8 family proteins GABARAP and GABARAPL1. Interacts with several glycogen-associated proteins, such as GYS2 (liver glycogen synthase), GDE (glycogen debranching enzyme), GBE1 (glycogen branching enzyme 1) and EPM2A (Laforin). Post-translationally, ubiquitinated, which leads to proteasomal degradation.

The protein resides in the preautophagosomal structure membrane. Its subcellular location is the endoplasmic reticulum membrane. It is found in the cell membrane. It localises to the sarcolemma. The protein localises to the T-tubule. In terms of biological role, acts as a cargo receptor for glycogen. Delivers its cargo to an autophagic pathway called glycophagy, resulting in the transport of glycogen to lysosomes. This Rattus norvegicus (Rat) protein is Starch-binding domain-containing protein 1.